Consider the following 874-residue polypeptide: Protein translocase subunit SecA (874 aa).

Residues glutamine 87, 105–109, and aspartate 512 contribute to the ATP site; that span reads GEGKT. Zn(2+) contacts are provided by cysteine 859, cysteine 861, cysteine 870, and histidine 871.

The protein belongs to the SecA family. As to quaternary structure, monomer and homodimer. Part of the essential Sec protein translocation apparatus which comprises SecA, SecYEG and auxiliary proteins SecDF-YajC and YidC. Requires Zn(2+) as cofactor.

It localises to the cell inner membrane. It is found in the cytoplasm. It carries out the reaction ATP + H2O + cellular proteinSide 1 = ADP + phosphate + cellular proteinSide 2.. Its function is as follows. Part of the Sec protein translocase complex. Interacts with the SecYEG preprotein conducting channel. Has a central role in coupling the hydrolysis of ATP to the transfer of proteins into and across the cell membrane, serving both as a receptor for the preprotein-SecB complex and as an ATP-driven molecular motor driving the stepwise translocation of polypeptide chains across the membrane. In Buchnera aphidicola subsp. Schizaphis graminum (strain Sg), this protein is Protein translocase subunit SecA.